The following is a 380-amino-acid chain: MAPNLRKSHPLLKMINNSLIDLPTPSNISAWWNFGSLLGICLTTQILTGLLLAMHYTADTTLAFSSVAHTCRNVQYGWLIRNLHANGASFFFICIYLHIGRGFYYGSYLYKETWNTGIILLLTLMATAFVGYVLPWGQMSFWGATVITNLFSAIPYIGQTLVEWAWGGFSVDNPTLTRFFALHFLLPFMIAGLTLIHLTFLHESGSNNPLGIVANSDKIPFHPYYSTKDTLGFALMLLPLTTLALFSPNLLGDPENFTPANPLVTPPHIKPEWYFLFAYAILRSIPNKLGGVLALAASVLILFLIPLLHKSKQRTMTFRPLSQLLFWTLVANLTILTWIGSQPVEHPFIIIGQLASLTYFTILLILFPLIGTLENKMLNH.

Helical transmembrane passes span 34 to 54, 78 to 99, 114 to 134, and 179 to 199; these read FGSLLGICLTTQILTGLLLAM, WLIRNLHANGASFFFICIYLHI, WNTGIILLLTLMATAFVGYVL, and FFALHFLLPFMIAGLTLIHLT. Residues His84 and His98 each contribute to the heme b site. Heme b contacts are provided by His183 and His197. Residue His202 coordinates a ubiquinone. 4 helical membrane-spanning segments follow: residues 227–247, 289–309, 321–341, and 348–368; these read TKDTLGFALMLLPLTTLALFS, LGGVLALAASVLILFLIPLLH, LSQLLFWTLVANLTILTWIGS, and FIIIGQLASLTYFTILLILFP.

Belongs to the cytochrome b family. The cytochrome bc1 complex contains 11 subunits: 3 respiratory subunits (MT-CYB, CYC1 and UQCRFS1), 2 core proteins (UQCRC1 and UQCRC2) and 6 low-molecular weight proteins (UQCRH/QCR6, UQCRB/QCR7, UQCRQ/QCR8, UQCR10/QCR9, UQCR11/QCR10 and a cleavage product of UQCRFS1). This cytochrome bc1 complex then forms a dimer. The cofactor is heme b.

The protein localises to the mitochondrion inner membrane. Its function is as follows. Component of the ubiquinol-cytochrome c reductase complex (complex III or cytochrome b-c1 complex) that is part of the mitochondrial respiratory chain. The b-c1 complex mediates electron transfer from ubiquinol to cytochrome c. Contributes to the generation of a proton gradient across the mitochondrial membrane that is then used for ATP synthesis. The chain is Cytochrome b (MT-CYB) from Aptenodytes patagonicus (King penguin).